A 503-amino-acid chain; its full sequence is 26S proteasome non-ATPase regulatory subunit 5 (503 aa).

N-acetylalanine is present on Ala-2.

It belongs to the proteasome subunit S5B/HSM3 family. Interacts with PSMC1, PSMC2, PSMD1 and PSMD6. Part of transient complex containing PSMD5, PSMC2, PSMC1 and PSMD2 formed during the assembly of the 26S proteasome.

Functionally, acts as a chaperone during the assembly of the 26S proteasome, specifically of the base subcomplex of the PA700/19S regulatory complex (RC). In the initial step of the base subcomplex assembly is part of an intermediate PSMD5:PSMC2:PSMC1:PSMD2 module which probably assembles with a PSMD10:PSMC4:PSMC5:PAAF1 module followed by dissociation of PSMD5. This is 26S proteasome non-ATPase regulatory subunit 5 (PSMD5) from Bos taurus (Bovine).